We begin with the raw amino-acid sequence, 277 residues long: Large ribosomal subunit protein uL2 (277 aa).

Positions 225–277 are disordered; it reads MNPIDHPHGGGEGKTAAGRHPVSPWGTPSKGFRTRVNKRTDGMIVRRRYSNKG.

Belongs to the universal ribosomal protein uL2 family. Part of the 50S ribosomal subunit. Forms a bridge to the 30S subunit in the 70S ribosome.

Functionally, one of the primary rRNA binding proteins. Required for association of the 30S and 50S subunits to form the 70S ribosome, for tRNA binding and peptide bond formation. It has been suggested to have peptidyltransferase activity; this is somewhat controversial. Makes several contacts with the 16S rRNA in the 70S ribosome. The sequence is that of Large ribosomal subunit protein uL2 from Nitrosospira multiformis (strain ATCC 25196 / NCIMB 11849 / C 71).